We begin with the raw amino-acid sequence, 343 residues long: S-adenosylmethionine:tRNA ribosyltransferase-isomerase (343 aa).

It belongs to the QueA family. As to quaternary structure, monomer.

It is found in the cytoplasm. It carries out the reaction 7-aminomethyl-7-carbaguanosine(34) in tRNA + S-adenosyl-L-methionine = epoxyqueuosine(34) in tRNA + adenine + L-methionine + 2 H(+). The protein operates within tRNA modification; tRNA-queuosine biosynthesis. In terms of biological role, transfers and isomerizes the ribose moiety from AdoMet to the 7-aminomethyl group of 7-deazaguanine (preQ1-tRNA) to give epoxyqueuosine (oQ-tRNA). This Coxiella burnetii (strain CbuG_Q212) (Coxiella burnetii (strain Q212)) protein is S-adenosylmethionine:tRNA ribosyltransferase-isomerase.